The following is a 263-amino-acid chain: MALPDFSMRQLLEAGVHFGHQTHRWNPRMKPYIYGERSGIHIMDLSHTVPALHQSLVFVRDTVAKGGRVLFVGTKRQAQEPVAEAAQRCAQYYMNHRWLGGTLTNWSTVSNSIKQLRELNAMFESGGGSGLTKKELLDLQRRRDKLQKSLGGIADMGGLPAAIVVIDTNKEAIAVQEARKLGIPVVAVLDTNCNPSDADFGFPGNDDAARAISLYCNLFADAVLDGLAESTAGLGVDLGASADIASLADADVKLADEEAAGEA.

The protein belongs to the universal ribosomal protein uS2 family.

The sequence is that of Small ribosomal subunit protein uS2 from Hyphomonas neptunium (strain ATCC 15444).